Here is a 453-residue protein sequence, read N- to C-terminus: Bifunctional protein GlmU (453 aa).

The tract at residues 1–226 is pyrophosphorylase; the sequence is MKFSTVILAA…SIEVEGVNDR (226 aa). UDP-N-acetyl-alpha-D-glucosamine is bound by residues 8-11, K22, Q73, 78-79, 100-102, G137, E151, N166, and N224; these read LAAG, GT, and YGD. Residue D102 coordinates Mg(2+). N224 contributes to the Mg(2+) binding site. Residues 227–247 are linker; it reads IQLARLERAFQARQAKKLLEQ. Positions 248–453 are N-acetyltransferase; the sequence is GVMLRDPARF…AGWQRPAKKK (206 aa). 2 residues coordinate UDP-N-acetyl-alpha-D-glucosamine: R330 and K348. H360 serves as the catalytic Proton acceptor. UDP-N-acetyl-alpha-D-glucosamine contacts are provided by Y363 and N374. Residues A377, 383-384, S402, A420, and R437 each bind acetyl-CoA; that span reads NY.

It in the N-terminal section; belongs to the N-acetylglucosamine-1-phosphate uridyltransferase family. This sequence in the C-terminal section; belongs to the transferase hexapeptide repeat family. In terms of assembly, homotrimer. The cofactor is Mg(2+).

The protein resides in the cytoplasm. The catalysed reaction is alpha-D-glucosamine 1-phosphate + acetyl-CoA = N-acetyl-alpha-D-glucosamine 1-phosphate + CoA + H(+). It carries out the reaction N-acetyl-alpha-D-glucosamine 1-phosphate + UTP + H(+) = UDP-N-acetyl-alpha-D-glucosamine + diphosphate. The protein operates within nucleotide-sugar biosynthesis; UDP-N-acetyl-alpha-D-glucosamine biosynthesis; N-acetyl-alpha-D-glucosamine 1-phosphate from alpha-D-glucosamine 6-phosphate (route II): step 2/2. It functions in the pathway nucleotide-sugar biosynthesis; UDP-N-acetyl-alpha-D-glucosamine biosynthesis; UDP-N-acetyl-alpha-D-glucosamine from N-acetyl-alpha-D-glucosamine 1-phosphate: step 1/1. Its pathway is bacterial outer membrane biogenesis; LPS lipid A biosynthesis. Its function is as follows. Catalyzes the last two sequential reactions in the de novo biosynthetic pathway for UDP-N-acetylglucosamine (UDP-GlcNAc). The C-terminal domain catalyzes the transfer of acetyl group from acetyl coenzyme A to glucosamine-1-phosphate (GlcN-1-P) to produce N-acetylglucosamine-1-phosphate (GlcNAc-1-P), which is converted into UDP-GlcNAc by the transfer of uridine 5-monophosphate (from uridine 5-triphosphate), a reaction catalyzed by the N-terminal domain. This Vibrio cholerae serotype O1 (strain M66-2) protein is Bifunctional protein GlmU.